Consider the following 328-residue polypeptide: Phenylalanine--tRNA ligase alpha subunit (328 aa).

Mg(2+) is bound at residue Glu245.

Belongs to the class-II aminoacyl-tRNA synthetase family. Phe-tRNA synthetase alpha subunit type 1 subfamily. As to quaternary structure, tetramer of two alpha and two beta subunits. The cofactor is Mg(2+).

The protein localises to the cytoplasm. The enzyme catalyses tRNA(Phe) + L-phenylalanine + ATP = L-phenylalanyl-tRNA(Phe) + AMP + diphosphate + H(+). This is Phenylalanine--tRNA ligase alpha subunit (pheS) from Helicobacter pylori (strain ATCC 700392 / 26695) (Campylobacter pylori).